We begin with the raw amino-acid sequence, 554 residues long: uncharacterized protein (554 aa).

Ca(2+) is bound by residues aspartate 327 and asparagine 328.

This sequence belongs to the sulfatase family. The cofactor is Ca(2+).

It localises to the cytoplasm. The protein localises to the nucleus. This is an uncharacterized protein from Schizosaccharomyces pombe (strain 972 / ATCC 24843) (Fission yeast).